The sequence spans 711 residues: Protein ACTIVITY OF BC1 COMPLEX KINASE 3, chloroplastic (711 aa).

Residues 1–42 (MSLVVGQSLGLTLVGDGLSLRNSKINVGKSKFFSVNRRRLAR) constitute a chloroplast transit peptide. A Protein kinase domain is found at 216 to 546 (SVSPEPIAAA…IELLFKDGKF (331 aa)). ATP is bound by residues 222–230 (IAAASLGQV) and Lys-245. The Proton acceptor role is filled by Asp-379.

The protein belongs to the protein kinase superfamily. ADCK protein kinase family. Interacts with ABC1K1 in plastoglobules (PG). Interacts with PGM48.

The protein resides in the plastid. It is found in the chloroplast. Its subcellular location is the plastoglobule. The catalysed reaction is L-seryl-[protein] + ATP = O-phospho-L-seryl-[protein] + ADP + H(+). It catalyses the reaction L-threonyl-[protein] + ATP = O-phospho-L-threonyl-[protein] + ADP + H(+). In terms of biological role, kinase that can phosphorylate the tocopherol cyclase VTE1, a key enzyme of tocopherol (vitamin E) metabolism and involved in the recycling of oxidated alpha-tocopherol quinone, possibly stabilizing it at plastoglobules. Also regulates membrane prenylquinone composition. Required for photooxidative stress responses to prevent photosystem II core and chlorophyll degradations. Together with ABC1K1, contributes to plastoglobule (PG) function in prenyl-lipid metabolism, stress response, and thylakoid remodeling. Promotes photodamage of chloroplasts under continuous red light, thus working in opposition to ABC1K1. This Arabidopsis thaliana (Mouse-ear cress) protein is Protein ACTIVITY OF BC1 COMPLEX KINASE 3, chloroplastic.